Reading from the N-terminus, the 543-residue chain is Thermosome subunit beta (543 aa).

Positions 522-543 (TKSSSSSSNPPKSGSSSESSED) are disordered. A compositionally biased stretch (low complexity) spans 523–543 (KSSSSSSNPPKSGSSSESSED).

Belongs to the TCP-1 chaperonin family. Forms a Heterooligomeric complex of two stacked eight-membered rings. In terms of processing, the N-terminus is blocked.

In terms of biological role, molecular chaperone; binds unfolded polypeptides in vitro, and has a weak ATPase activity. This is Thermosome subunit beta (thsB) from Thermoplasma acidophilum (strain ATCC 25905 / DSM 1728 / JCM 9062 / NBRC 15155 / AMRC-C165).